A 324-amino-acid chain; its full sequence is Mitochondrial thiamine pyrophosphate carrier 1 (324 aa).

Solcar repeat units follow at residues 12–110 (GNRI…ISSA), 119–205 (PQPV…LRSP), and 212–307 (PFGT…VLGL). The next 6 membrane-spanning stretches (helical) occupy residues 15–35 (IQVV…VAPL), 79–99 (ITGL…YGGI), 125–145 (FISG…LDLL), 182–202 (TAAI…YEAL), 218–238 (AGAG…LDLV), and 282–299 (GLTV…VTMW).

The protein belongs to the mitochondrial carrier (TC 2.A.29) family.

It is found in the mitochondrion inner membrane. Functionally, mitochondrial transporter that mediates uptake of thiamine pyrophosphate (ThPP) into mitochondria. In Ajellomyces capsulatus (strain NAm1 / WU24) (Darling's disease fungus), this protein is Mitochondrial thiamine pyrophosphate carrier 1 (TPC1).